Consider the following 404-residue polypeptide: Sodium/glutamate symporter (404 aa).

11 consecutive transmembrane segments (helical) span residues 5 to 25 (FSTYETLALASLVLLLGYFLV), 33 to 53 (TFNIPEPVVGGFIVAIGLLIW), 69 to 89 (TTMMLVFFTSIGLSANFSRLI), 95 to 115 (LVVFLFIAALLIFGQNVIGIA), 161 to 181 (IAIACATFGLVFGGIIGGPVA), 219 to 239 (SLIETIAMISVCLLIGQYLDV), 245 to 265 (ALQLPTFVWCLFTGVIVRNIL), 277 to 297 (AIDVLGSVGLSIFLAIALMSL), 307 to 327 (IDVLIVLAIQVAFMAAFAIFI), 338 to 358 (AVVLSAGHCGFGLGATPTAIA), and 373 to 393 (AFLIVPMVGAFFIDLINAALL).

Belongs to the glutamate:Na(+) symporter (ESS) (TC 2.A.27) family.

The protein resides in the cell inner membrane. Its function is as follows. Catalyzes the sodium-dependent transport of glutamate. This is Sodium/glutamate symporter from Haemophilus influenzae (strain ATCC 51907 / DSM 11121 / KW20 / Rd).